Consider the following 394-residue polypeptide: Penicillopepsin-2 (394 aa).

The first 20 residues, 1 to 20 (MVVFSKITVVLAGLATVASA), serve as a signal peptide directing secretion. A propeptide spans 21-71 (VPTGTSRKSTFTVNQKARPVAQAKAINLPGMYASALSKYGAAVPASVKAAA) (activation peptide). The region spanning 87–391 (YLTPVNVGGT…DANGPRLGFA (305 aa)) is the Peptidase A1 domain. Residue aspartate 103 is part of the active site. N-linked (GlcNAc...) asparagine glycosylation occurs at asparagine 132. Aspartate 283 is an active-site residue. Cysteine 319 and cysteine 354 are joined by a disulfide.

The protein belongs to the peptidase A1 family. As to quaternary structure, monomer.

The protein localises to the secreted. It catalyses the reaction Hydrolysis of proteins with broad specificity similar to that of pepsin A, preferring hydrophobic residues at P1 and P1', but also cleaving 20-Gly-|-Glu-21 in the B chain of insulin. Clots milk, and activates trypsinogen.. Functionally, secreted aspartic endopeptidase that allows assimilation of proteinaceous substrates. The scissile peptide bond is attacked by a nucleophilic water molecule activated by two aspartic residues in the active site. Shows a broad primary substrate specificity. Favors hydrophobic residues at the P1 and P1' positions, but can also activate trypsinogen and hydrolyze the B chain of insulin between positions 'Gly-20' and 'Glu-21'. The protein is Penicillopepsin-2 of Penicillium janthinellum (Penicillium vitale).